A 281-amino-acid polypeptide reads, in one-letter code: Phosphonates import ATP-binding protein PhnC (281 aa).

Residues 2-245 (FELKDVTRRF…AVKEIYGTDK (244 aa)) enclose the ABC transporter domain. An ATP-binding site is contributed by 34-41 (GRSGAGKS).

Belongs to the ABC transporter superfamily. Phosphonates importer (TC 3.A.1.9.1) family. As to quaternary structure, the complex is composed of two ATP-binding proteins (PhnC), two transmembrane proteins (PhnE) and a solute-binding protein (PhnD).

It is found in the cell inner membrane. The enzyme catalyses phosphonate(out) + ATP + H2O = phosphonate(in) + ADP + phosphate + H(+). Functionally, part of the ABC transporter complex PhnCDE involved in phosphonates import. Responsible for energy coupling to the transport system. In Rhizobium etli (strain ATCC 51251 / DSM 11541 / JCM 21823 / NBRC 15573 / CFN 42), this protein is Phosphonates import ATP-binding protein PhnC.